Here is a 181-residue protein sequence, read N- to C-terminus: Small ribosomal subunit protein uS4 (181 aa).

The S4 RNA-binding domain occupies 108–177 (RRLQTMVYRQ…EGHPEIERIN (70 aa)). The interval 161–181 (GTSPLTSEGHPEIERINKKRR) is disordered. Positions 169–181 (GHPEIERINKKRR) are enriched in basic and acidic residues.

Belongs to the universal ribosomal protein uS4 family. As to quaternary structure, part of the 30S ribosomal subunit. Contacts protein S5. The interaction surface between S4 and S5 is involved in control of translational fidelity.

In terms of biological role, one of the primary rRNA binding proteins, it binds directly to 16S rRNA where it nucleates assembly of the body of the 30S subunit. With S5 and S12 plays an important role in translational accuracy. This Methanosphaerula palustris (strain ATCC BAA-1556 / DSM 19958 / E1-9c) protein is Small ribosomal subunit protein uS4.